The primary structure comprises 152 residues: Superoxide dismutase [Cu-Zn] 1 (152 aa).

Histidine 45, histidine 47, and histidine 62 together coordinate Cu cation. An intrachain disulfide couples cysteine 56 to cysteine 145. Zn(2+)-binding residues include histidine 62, histidine 70, histidine 79, and aspartate 82. Histidine 119 is a Cu cation binding site.

Belongs to the Cu-Zn superoxide dismutase family. In terms of assembly, homodimer. Interacts with DJ1A and CCS. Cu cation serves as cofactor. The cofactor is Zn(2+). As to expression, expressed in leaves (at protein level). The spatial localization is regulated by miR398-mediated silencing. Mostly present in flowers, old rosette leaves and inflorescence, and, to a lower extent, in cauline leaves, stems and roots.

The protein resides in the cytoplasm. The protein localises to the cytosol. It is found in the nucleus. It catalyses the reaction 2 superoxide + 2 H(+) = H2O2 + O2. In terms of biological role, destroys radicals which are normally produced within the cells and which are toxic to biological systems. This Arabidopsis thaliana (Mouse-ear cress) protein is Superoxide dismutase [Cu-Zn] 1 (CSD1).